The chain runs to 112 residues: Nitrogen regulatory protein P-II (112 aa).

Y51 carries the post-translational modification O-UMP-tyrosine.

It belongs to the P(II) protein family. In terms of assembly, homotrimer.

In terms of biological role, in nitrogen-limiting conditions, when the ratio of Gln to 2-ketoglutarate decreases, P-II is uridylylated to P-II-UMP. P-II-UMP allows the deadenylation of glutamine synthetase (GS), thus activating the enzyme. Conversely, in nitrogen excess P-II is deuridylated and promotes the adenylation of GS. P-II indirectly controls the transcription of the GS gene (glnA). P-II prevents NR-II-catalyzed conversion of NR-I to NR-I-phosphate, the transcriptional activator of glnA. When P-II is uridylylated to P-II-UMP, these events are reversed. The polypeptide is Nitrogen regulatory protein P-II (glnB) (Rhizobium etli (strain ATCC 51251 / DSM 11541 / JCM 21823 / NBRC 15573 / CFN 42)).